Consider the following 907-residue polypeptide: NADH-quinone oxidoreductase subunit G (907 aa).

One can recognise a 2Fe-2S ferredoxin-type domain in the interval 1-83 (MTIIFVDNEE…GMIVSTSDKI (83 aa)). Residues cysteine 34, cysteine 45, cysteine 48, and cysteine 67 each contribute to the [2Fe-2S] cluster site. The 40-residue stretch at 83 to 122 (ISRNFRKGIIELLMLNHPHDCPICEEGGSCHLQDMTVMAG) folds into the 4Fe-4S His(Cys)3-ligated-type domain. [4Fe-4S] cluster contacts are provided by histidine 99, cysteine 103, cysteine 106, cysteine 112, cysteine 151, cysteine 154, cysteine 157, cysteine 201, cysteine 228, cysteine 231, cysteine 235, and cysteine 263. In terms of domain architecture, 4Fe-4S Mo/W bis-MGD-type spans 221-277 (MQYAPSICQHCCVGCNISVGEKYGKISRIENRYHNAINHYFLCDLGRFSYDYSNVDE).

The protein belongs to the complex I 75 kDa subunit family. In terms of assembly, composed of 13 different subunits. Subunits NuoCD, E, F, and G constitute the peripheral sector of the complex. It depends on [2Fe-2S] cluster as a cofactor. [4Fe-4S] cluster is required as a cofactor.

It carries out the reaction a quinone + NADH + 5 H(+)(in) = a quinol + NAD(+) + 4 H(+)(out). Its function is as follows. NDH-1 shuttles electrons from NADH, via FMN and iron-sulfur (Fe-S) centers, to quinones in the respiratory chain. Couples the redox reaction to proton translocation (for every two electrons transferred, four hydrogen ions are translocated across the cytoplasmic membrane), and thus conserves the redox energy in a proton gradient. The polypeptide is NADH-quinone oxidoreductase subunit G (nuoG) (Buchnera aphidicola subsp. Baizongia pistaciae (strain Bp)).